Here is a 501-residue protein sequence, read N- to C-terminus: WD repeat-containing protein wdr-5.3 (501 aa).

Disordered regions lie at residues 1–35 (MNPE…LESN), 58–85 (PIGV…YQSH), and 155–197 (KSAE…ITKK). The segment covering 22-35 (PNQQSLQSRMLESN) has biased composition (polar residues). A compositionally biased stretch (polar residues) spans 167–177 (SITTKPTSTIQ). 7 WD repeats span residues 211-241 (GHTK…KVWN), 253-283 (SHQL…KIFD), 295-325 (GHTN…RVWD), 337-367 (AHSD…RVWD), 381-410 (DHAP…KLWD), 422-455 (GHKN…LVWS), and 467-499 (GHTT…RIWR).

It belongs to the WD repeat WDR5/wds family.

In terms of biological role, not required for methylation of histone H3 'Lys-4'. This Caenorhabditis elegans protein is WD repeat-containing protein wdr-5.3 (wdr-5.3).